Consider the following 317-residue polypeptide: Beta-ketoacyl-[acyl-carrier-protein] synthase III (317 aa).

Active-site residues include Cys112 and His244. Positions Gln245–Arg249 are ACP-binding. Residue Asn274 is part of the active site.

This sequence belongs to the thiolase-like superfamily. FabH family. In terms of assembly, homodimer.

The protein localises to the cytoplasm. The catalysed reaction is malonyl-[ACP] + acetyl-CoA + H(+) = 3-oxobutanoyl-[ACP] + CO2 + CoA. It participates in lipid metabolism; fatty acid biosynthesis. Functionally, catalyzes the condensation reaction of fatty acid synthesis by the addition to an acyl acceptor of two carbons from malonyl-ACP. Catalyzes the first condensation reaction which initiates fatty acid synthesis and may therefore play a role in governing the total rate of fatty acid production. Possesses both acetoacetyl-ACP synthase and acetyl transacylase activities. Its substrate specificity determines the biosynthesis of branched-chain and/or straight-chain of fatty acids. This chain is Beta-ketoacyl-[acyl-carrier-protein] synthase III, found in Pectobacterium atrosepticum (strain SCRI 1043 / ATCC BAA-672) (Erwinia carotovora subsp. atroseptica).